Reading from the N-terminus, the 481-residue chain is Cobyric acid synthase (481 aa).

A GATase cobBQ-type domain is found at Ala247–Ser433. Cys328 functions as the Nucleophile in the catalytic mechanism. His425 is an active-site residue.

This sequence belongs to the CobB/CobQ family. CobQ subfamily.

It functions in the pathway cofactor biosynthesis; adenosylcobalamin biosynthesis. Functionally, catalyzes amidations at positions B, D, E, and G on adenosylcobyrinic A,C-diamide. NH(2) groups are provided by glutamine, and one molecule of ATP is hydrogenolyzed for each amidation. The polypeptide is Cobyric acid synthase (Alcanivorax borkumensis (strain ATCC 700651 / DSM 11573 / NCIMB 13689 / SK2)).